We begin with the raw amino-acid sequence, 332 residues long: Anthranilate phosphoribosyltransferase (332 aa).

5-phospho-alpha-D-ribose 1-diphosphate contacts are provided by residues G80, G83 to D84, T88, N90 to T93, K108 to G116, and S120. G80 provides a ligand contact to anthranilate. A Mg(2+)-binding site is contributed by S92. Residue N111 coordinates anthranilate. R166 contributes to the anthranilate binding site. Mg(2+) is bound by residues D224 and E225.

It belongs to the anthranilate phosphoribosyltransferase family. Homodimer. The cofactor is Mg(2+).

It carries out the reaction N-(5-phospho-beta-D-ribosyl)anthranilate + diphosphate = 5-phospho-alpha-D-ribose 1-diphosphate + anthranilate. It functions in the pathway amino-acid biosynthesis; L-tryptophan biosynthesis; L-tryptophan from chorismate: step 2/5. Its function is as follows. Catalyzes the transfer of the phosphoribosyl group of 5-phosphorylribose-1-pyrophosphate (PRPP) to anthranilate to yield N-(5'-phosphoribosyl)-anthranilate (PRA). This chain is Anthranilate phosphoribosyltransferase, found in Pyrobaculum calidifontis (strain DSM 21063 / JCM 11548 / VA1).